The primary structure comprises 356 residues: Histidinol-phosphate aminotransferase (356 aa).

At K214 the chain carries N6-(pyridoxal phosphate)lysine.

The protein belongs to the class-II pyridoxal-phosphate-dependent aminotransferase family. Histidinol-phosphate aminotransferase subfamily. As to quaternary structure, homodimer. Requires pyridoxal 5'-phosphate as cofactor.

It carries out the reaction L-histidinol phosphate + 2-oxoglutarate = 3-(imidazol-4-yl)-2-oxopropyl phosphate + L-glutamate. The protein operates within amino-acid biosynthesis; L-histidine biosynthesis; L-histidine from 5-phospho-alpha-D-ribose 1-diphosphate: step 7/9. The protein is Histidinol-phosphate aminotransferase of Shigella sonnei (strain Ss046).